Here is a 305-residue protein sequence, read N- to C-terminus: Translation initiation factor eIF2B subunit alpha (305 aa).

An N6-acetyllysine modification is found at lysine 35.

The protein belongs to the eIF-2B alpha/beta/delta subunits family. In terms of assembly, component of the translation initiation factor 2B (eIF2B) complex which is a heterodecamer of two sets of five different subunits: alpha, beta, gamma, delta and epsilon. Subunits alpha, beta and delta comprise a regulatory subcomplex and subunits epsilon and gamma comprise a catalytic subcomplex. Within the complex, the hexameric regulatory complex resides at the center, with the two heterodimeric catalytic subcomplexes bound on opposite sides.

Its subcellular location is the cytoplasm. It localises to the cytosol. Activated by the chemical integrated stress response (ISR) inhibitor ISRIB which stimulates guanine nucleotide exchange factor activity for both phosphorylated and unphosphorylated eIF2. Functionally, acts as a component of the translation initiation factor 2B (eIF2B) complex, which catalyzes the exchange of GDP for GTP on eukaryotic initiation factor 2 (eIF2) gamma subunit. Its guanine nucleotide exchange factor activity is repressed when bound to eIF2 complex phosphorylated on the alpha subunit, thereby limiting the amount of methionyl-initiator methionine tRNA available to the ribosome and consequently global translation is repressed. The polypeptide is Translation initiation factor eIF2B subunit alpha (EIF2B1) (Pongo abelii (Sumatran orangutan)).